Here is a 533-residue protein sequence, read N- to C-terminus: CTP synthase (533 aa).

Positions 1-270 are amidoligase domain; it reads MVHLAKYIVV…GDYIVRRIEL (270 aa). A CTP-binding site is contributed by serine 16. Serine 16 provides a ligand contact to UTP. 17-22 contacts ATP; the sequence is SIGKGI. Residue tyrosine 57 coordinates L-glutamine. Aspartate 74 is a binding site for ATP. Mg(2+) is bound by residues aspartate 74 and glutamate 144. CTP-binding positions include 151 to 153, 191 to 196, and lysine 227; these read DIE and KTKPTQ. UTP contacts are provided by residues 191-196 and lysine 227; that span reads KTKPTQ. The region spanning 303-533 is the Glutamine amidotransferase type-1 domain; the sequence is YVELEDSYIS…FLRAALERSR (231 aa). Glycine 355 is a binding site for L-glutamine. Catalysis depends on cysteine 382, which acts as the Nucleophile; for glutamine hydrolysis. L-glutamine-binding positions include 383–386, glutamate 405, and arginine 462; that span reads LGMQ. Residues histidine 507 and glutamate 509 contribute to the active site.

Belongs to the CTP synthase family. As to quaternary structure, homotetramer.

It carries out the reaction UTP + L-glutamine + ATP + H2O = CTP + L-glutamate + ADP + phosphate + 2 H(+). The catalysed reaction is L-glutamine + H2O = L-glutamate + NH4(+). The enzyme catalyses UTP + NH4(+) + ATP = CTP + ADP + phosphate + 2 H(+). The protein operates within pyrimidine metabolism; CTP biosynthesis via de novo pathway; CTP from UDP: step 2/2. With respect to regulation, allosterically activated by GTP, when glutamine is the substrate; GTP has no effect on the reaction when ammonia is the substrate. The allosteric effector GTP functions by stabilizing the protein conformation that binds the tetrahedral intermediate(s) formed during glutamine hydrolysis. Inhibited by the product CTP, via allosteric rather than competitive inhibition. In terms of biological role, catalyzes the ATP-dependent amination of UTP to CTP with either L-glutamine or ammonia as the source of nitrogen. Regulates intracellular CTP levels through interactions with the four ribonucleotide triphosphates. The protein is CTP synthase of Methanothermobacter thermautotrophicus (strain ATCC 29096 / DSM 1053 / JCM 10044 / NBRC 100330 / Delta H) (Methanobacterium thermoautotrophicum).